Reading from the N-terminus, the 531-residue chain is 2,3-bisphosphoglycerate-independent phosphoglycerate mutase (531 aa).

Residues D15 and S65 each contribute to the Mn(2+) site. S65 (phosphoserine intermediate) is an active-site residue. Residues H126, 155–156 (RD), R187, R193, 257–260 (RPDR), and K330 each bind substrate. Residues D397, H401, D438, H439, and H456 each coordinate Mn(2+).

It belongs to the BPG-independent phosphoglycerate mutase family. As to quaternary structure, monomer. It depends on Mn(2+) as a cofactor.

The catalysed reaction is (2R)-2-phosphoglycerate = (2R)-3-phosphoglycerate. It functions in the pathway carbohydrate degradation; glycolysis; pyruvate from D-glyceraldehyde 3-phosphate: step 3/5. Catalyzes the interconversion of 2-phosphoglycerate and 3-phosphoglycerate. In Thermosynechococcus vestitus (strain NIES-2133 / IAM M-273 / BP-1), this protein is 2,3-bisphosphoglycerate-independent phosphoglycerate mutase.